We begin with the raw amino-acid sequence, 156 residues long: 3-hydroxyacyl-[acyl-carrier-protein] dehydratase FabZ (156 aa).

The active site involves H62.

This sequence belongs to the thioester dehydratase family. FabZ subfamily.

It is found in the cytoplasm. The catalysed reaction is a (3R)-hydroxyacyl-[ACP] = a (2E)-enoyl-[ACP] + H2O. In terms of biological role, involved in unsaturated fatty acids biosynthesis. Catalyzes the dehydration of short chain beta-hydroxyacyl-ACPs and long chain saturated and unsaturated beta-hydroxyacyl-ACPs. The chain is 3-hydroxyacyl-[acyl-carrier-protein] dehydratase FabZ from Parasynechococcus marenigrum (strain WH8102).